The primary structure comprises 153 residues: Actin-related protein 2/3 complex subunit 5-like protein (153 aa).

Position 64 is a phosphoserine (Ser64).

It belongs to the ARPC5 family. May be a component of the Arp2/3 complex in which it may replace ARPC5.

Its subcellular location is the cytoplasm. It localises to the cytoskeleton. The protein resides in the cell projection. Functionally, may function as component of the Arp2/3 complex which is involved in regulation of actin polymerization and together with an activating nucleation-promoting factor (NPF) mediates the formation of branched actin networks. The protein is Actin-related protein 2/3 complex subunit 5-like protein (ARPC5L) of Bos taurus (Bovine).